Reading from the N-terminus, the 1727-residue chain is Nucleoporin alm1 (1727 aa).

7 coiled-coil regions span residues 57–361 (QEVN…KNTS), 443–463 (NFLSESLETSNNNLTKVQAEL), 542–740 (IKEA…AEEL), 804–1106 (AARK…INES), 1223–1427 (GERS…QLNK), 1497–1555 (NEEE…AESA), and 1601–1664 (QKEW…KKDS). Positions 1423 to 1448 (EQLNKPSATPTATTQSEPSTVSLEEF) are enriched in polar residues. 3 disordered regions span residues 1423-1459 (EQLNKPSATPTATTQSEPSTVSLEEFNSTKEELSSTQ), 1477-1500 (EKVRQNSNKSEGTSKDTEIPNEEE), and 1656-1727 (LEQS…KKAK). Polar residues-rich tracts occupy residues 1672–1684 (ASKNTDSNKSNSE) and 1702–1714 (VDTNSPPKRSSSD). Serine 1706 is modified (phosphoserine).

The protein localises to the nucleus. Its subcellular location is the nuclear pore complex. The protein resides in the nucleus envelope. Functionally, maintains the proteasome and its anchor cut8 at the nucleus envelope and is required for kinetochore component proteostasis. Proper kinetochore stoichiometry ensures the correct attachment of kinetochores to spindle microtubules during cytokinesis. Required for the localization of spindle assembly checkpoint (SAC) protein mad2 and bub1 to the nucleus envelope during interphase, but not their localization during mitosis. This chain is Nucleoporin alm1, found in Schizosaccharomyces pombe (strain 972 / ATCC 24843) (Fission yeast).